Reading from the N-terminus, the 359-residue chain is tRNA-specific 2-thiouridylase MnmA (359 aa).

Residues 10–17 and Leu36 each bind ATP; that span reads GISGGVDS. Cys101 serves as the catalytic Nucleophile. The cysteines at positions 101 and 197 are disulfide-linked. Residue Gly125 coordinates ATP. The segment at 147-149 is interaction with tRNA; it reads KDQ. Cys197 serves as the catalytic Cysteine persulfide intermediate. The interval 306-307 is interaction with tRNA; that stretch reads RY.

This sequence belongs to the MnmA/TRMU family.

Its subcellular location is the cytoplasm. It carries out the reaction S-sulfanyl-L-cysteinyl-[protein] + uridine(34) in tRNA + AH2 + ATP = 2-thiouridine(34) in tRNA + L-cysteinyl-[protein] + A + AMP + diphosphate + H(+). Catalyzes the 2-thiolation of uridine at the wobble position (U34) of tRNA, leading to the formation of s(2)U34. The polypeptide is tRNA-specific 2-thiouridylase MnmA (Chlorobium chlorochromatii (strain CaD3)).